The following is a 439-amino-acid chain: MMADEELGDEVKVFRRDEDADDDPMISGETSEQQLADDKKDAVMEAELDGAGRVPLIGGLKAEIKAEPSPSFPMPSMLPCGPYSPFSGLPIMFPMVVPQYLSPNPNINMMNMMTMRAAMAGAPLSPAFPAMFSPNPLFPFPGVVAKQHLENTMPMHMRAGPLSSLNHMKMPPYMPHQMMPQHNERRGHGGGKVKKEDHIKKPLNAFMWYMKENRPKLLEEVGNDQKQSAELNKELGKRWHDLPKEEQQKYFEMAKKDRESHKEKYPQWSARENYAVNKKKPKRKRDKSVVSGSENNDQKKCRARFGVTNTSMWCKPCQRKKKCIYATDRSGSELNDGHDGRGTSGGCSSSSESSSPNNNQPMPMNAPQTVAAMHAMLMGMQIGQSAHLASSHSTGSSGTSPPVANPSDSESDVDEDEDIDPTITQQTQEYIMQESVCTL.

Residues Met-1–Asp-38 are disordered. Positions Asp-9–Glu-18 are enriched in basic and acidic residues. Residues Ser-87–Phe-138 form an involved in nuclear asymmetry region. Residue Ser-125 is modified to Phosphoserine; by LIT1. The HMG box DNA-binding region spans Ile-199–Ser-269. Over residues Ala-254–Tyr-265 the composition is skewed to basic and acidic residues. 3 disordered regions span residues Ala-254–Gln-298, Arg-329–Asn-365, and Ser-385–Leu-439. Over residues Asn-277 to Asp-286 the composition is skewed to basic residues. Low complexity-rich tracts occupy residues Gly-346–Asn-365 and Ser-385–Ser-400. Over residues Ser-409–Asp-420 the composition is skewed to acidic residues. Positions Thr-422 to Leu-439 are enriched in polar residues.

It belongs to the TCF/LEF family. As to quaternary structure, interacts with hda-1. Interacts with bar-1. Interacts with par-5; the interaction is direct and is enhanced by lit-1-mediated pop-1 phosphorylation. The interaction also leads to the subsequent nuclear export of pop-1. Interacts (when phosphorylated on Ser-125) with lit-1; the interaction is dependent on the beta-catenin-lit-1 complex. Interacts with wrm-1. Phosphorylated on Ser-125 by lit-1 in the beta-catenin-lit-1 complex. Phosphorylation promotes the interaction of pop-1 and par-5 and the subsequent translocation of pop-1 from the nucleus to the cytoplasm.

The protein localises to the nucleus. It localises to the cytoplasm. Part of the Wnt signaling pathway essential for the specification of the mesodermal cell fate in early embryos. Required for asymmetrical division of somatic gonadal precursor descendants which initiate axis formation required to control organ shape. Similarly, involved in asymmetrical division of seam cells, a stem cell-like lineage. Represses expression of target genes via its interaction with hda-1 histone deacetylase. Required for specification of the M lineage-derived coelomocyte and sex myoblast fate. Regulates coelomocyte fate by positively regulating proliferation and ceh-34 and possibly eya-1 expression in M.dlpa and M.drpa precursors. The polypeptide is Protein pop-1 (Caenorhabditis briggsae).